The chain runs to 263 residues: Protein PUN1 (263 aa).

Topologically, residues 1–6 are cytoplasmic; the sequence is MRNFFT. The helical transmembrane segment at 7-27 threads the bilayer; that stretch reads LFFAAIFSLGALILAIVACAG. The Extracellular segment spans residues 28-143; the sequence is STKNYSPINK…MTYYNNLVKC (116 aa). Asparagine 100 is a glycosylation site (N-linked (GlcNAc...) asparagine). Residues 144 to 164 form a helical membrane-spanning segment; it reads MFITILIGIVLTFVNLVFNVL. Topologically, residues 165–172 are cytoplasmic; it reads RWIIHIRP. Residues 173-193 traverse the membrane as a helical segment; it reads LTWFGAFFSFFAFAALLVSIG. Over 194–223 the chain is Extracellular; the sequence is SCLGTYSYIKYILKHNYSDYGISMSIGRNY. Asparagine 209 carries N-linked (GlcNAc...) asparagine glycosylation. The chain crosses the membrane as a helical span at residues 224-244; it reads QGLMWGAVVGALLNFILWCSV. The Cytoplasmic portion of the chain corresponds to 245-263; that stretch reads RSRPTVIYANAPIEEKPLI. Lysine 260 participates in a covalent cross-link: Glycyl lysine isopeptide (Lys-Gly) (interchain with G-Cter in ubiquitin).

This sequence belongs to the SUR7 family. Post-translationally, N-glycosylated.

The protein resides in the cell membrane. Contributes to the wild-type cellular response to nitrogen stress through signaling pathways that regulate the expression of genes involved in amino acid biosynthesis. Required for wild-type filamentous growth, cell growth, and cell-cell adhesion. This chain is Protein PUN1 (PUN1), found in Saccharomyces cerevisiae (strain ATCC 204508 / S288c) (Baker's yeast).